Here is an 83-residue protein sequence, read N- to C-terminus: Hainantoxin-III 11 (83 aa).

The N-terminal stretch at M1–A21 is a signal peptide. Positions S22 to R48 are excised as a propeptide. Cystine bridges form between C50-C65, C57-C70, and C64-C77. A Leucine amide modification is found at L81.

The protein belongs to the neurotoxin 10 (Hwtx-1) family. 15 (Hntx-3) subfamily. In terms of assembly, monomer. Expressed by the venom gland.

The protein resides in the secreted. In terms of biological role, selective antagonist of neuronal tetrodotoxin (TTX)-sensitive voltage-gated sodium channels (IC(50)=1270 nM on Nav1.1/SCN1A, 270 nM on Nav1.2/SCN2A, 491 nM on Nav1.3/SCN3A and 232 nM on Nav1.7/SCN9A). This toxin suppress Nav1.7 current amplitude without significantly altering the activation, inactivation, and repriming kinetics. Short extreme depolarizations partially activate the toxin-bound channel, indicating voltage-dependent inhibition of this toxin. This toxin increases the deactivation of the Nav1.7 current after extreme depolarizations. The toxin-Nav1.7 complex is gradually dissociated upon prolonged strong depolarizations in a voltage-dependent manner, and the unbound toxin rebinds to Nav1.7 after a long repolarization. Moreover, analysis of chimeric channels showed that the DIIS3-S4 linker is critical for toxin binding to Nav1.7. These data are consistent with this toxin interacting with Nav1.7 site 4 and trapping the domain II voltage sensor in the closed state. In Cyriopagopus hainanus (Chinese bird spider), this protein is Hainantoxin-III 11.